The sequence spans 572 residues: MTIHQLINERVQAALAAAGAPDAPAVVQPASKPEFGDYQANGVMGAAKALKTNPRALAEKVVAALDLAGIADKVEIAGPGFINIHLAPEYLARRSEAALKDDKLGIAPVKPLRVMVEYSSPNLAKEMHVGHLRSSIIGDALARVMEYVGHDVVRANHVGDWGTQFGMLVAYLVETRHAGDADLQLSDLETFYRNAKIRFDESEDFANTARDYVVKLQGGDEEVLKLWRQFVDVSLKHCEDVYEKLNVGLKREHVRGESSYNDDLPVIVQELREKGLLTEDDGAQVVFLDEFRTQEDKPMGVIVQKKDGGFIYTTTDIGAVRYRHRELKLDRVIYVVDARQSQHFAQMFTICRKAGFAPEAMKLEHVGFGVMMGDDGKPFKTRSGGTVKLIELLNEAEERAYALVSEKNPDLSDAQKREIANAVGIGAVKYADLSKNRMSDYIFNWDTMLAFEGNTAPYLQYAYTRVQSVFRKAEDYDANARIVITEPAEKQLAAALAQFEDTLNSVVEGCYPHYLSLYLYQIATLFSRFYEACPILKSEGEVRASRLQLAALTAKTLRTGLDLLGIKVLESM.

The 'HIGH' region signature appears at 121–131 (PNLAKEMHVGH).

It belongs to the class-I aminoacyl-tRNA synthetase family. In terms of assembly, monomer.

The protein localises to the cytoplasm. It catalyses the reaction tRNA(Arg) + L-arginine + ATP = L-arginyl-tRNA(Arg) + AMP + diphosphate. The protein is Arginine--tRNA ligase of Chromobacterium violaceum (strain ATCC 12472 / DSM 30191 / JCM 1249 / CCUG 213 / NBRC 12614 / NCIMB 9131 / NCTC 9757 / MK).